A 159-amino-acid polypeptide reads, in one-letter code: Ecotin (159 aa).

An N-terminal signal peptide occupies residues 1–22 (MRPTPMTAILALSLAAAAPAMA). An intrachain disulfide couples C68 to C105.

Belongs to the protease inhibitor I11 (ecotin) family. In terms of assembly, homodimer.

It is found in the periplasm. General inhibitor of family S1 serine proteases. The polypeptide is Ecotin (Pseudomonas putida (strain ATCC 700007 / DSM 6899 / JCM 31910 / BCRC 17059 / LMG 24140 / F1)).